Here is a 370-residue protein sequence, read N- to C-terminus: GTPase Obg (370 aa).

An Obg domain is found at 1 to 159 (MKFIDEARIE…RKLKLELKVL (159 aa)). The tract at residues 129 to 148 (HFKSSTNRAPRQKTNGKSGE) is disordered. A compositionally biased stretch (polar residues) spans 130 to 145 (FKSSTNRAPRQKTNGK). Positions 160 to 334 (ADVGLLGMPN…LCYSLQDYLD (175 aa)) constitute an OBG-type G domain. Residues 166 to 173 (GMPNAGKS), 191 to 195 (FTTLH), 213 to 216 (DIPG), 284 to 287 (NKVD), and 315 to 317 (SAL) each bind GTP. 2 residues coordinate Mg(2+): S173 and T193.

The protein belongs to the TRAFAC class OBG-HflX-like GTPase superfamily. OBG GTPase family. Monomer. Mg(2+) is required as a cofactor.

The protein resides in the cytoplasm. Its function is as follows. An essential GTPase which binds GTP, GDP and possibly (p)ppGpp with moderate affinity, with high nucleotide exchange rates and a fairly low GTP hydrolysis rate. Plays a role in control of the cell cycle, stress response, ribosome biogenesis and in those bacteria that undergo differentiation, in morphogenesis control. The protein is GTPase Obg of Polynucleobacter necessarius subsp. necessarius (strain STIR1).